Consider the following 210-residue polypeptide: Dynein regulatory complex protein 12 (210 aa).

The segment at 1–23 (MPPKNKEKGKKSGAQKKKKNWGA) is disordered. A compositionally biased stretch (basic residues) spans 7–20 (EKGKKSGAQKKKKN). Residues 49-161 (RDEARRAKAS…EAKYEEILHD (113 aa)) adopt a coiled-coil conformation. The segment at 188-210 (HKEQQRQFGLTPPGSLRPPAPSL) is disordered.

This sequence belongs to the DRC12 family. In terms of assembly, component of the nexin-dynein regulatory complex (N-DRC).

Its subcellular location is the cytoplasm. The protein resides in the cytoskeleton. The protein localises to the flagellum axoneme. Functionally, component of the nexin-dynein regulatory complex (N-DRC), a key regulator of ciliary/flagellar motility which maintains the alignment and integrity of the distal axoneme and regulates microtubule sliding in motile axonemes. This is Dynein regulatory complex protein 12 from Homo sapiens (Human).